The sequence spans 158 residues: Transcription elongation factor GreA (158 aa).

Residues 49–69 (SEYESAKDEQAFVEGRISQIE) adopt a coiled-coil conformation. The interval 102 to 125 (EEPESYTIVGESESDPLSGKISNE) is disordered.

The protein belongs to the GreA/GreB family.

Its function is as follows. Necessary for efficient RNA polymerase transcription elongation past template-encoded arresting sites. The arresting sites in DNA have the property of trapping a certain fraction of elongating RNA polymerases that pass through, resulting in locked ternary complexes. Cleavage of the nascent transcript by cleavage factors such as GreA or GreB allows the resumption of elongation from the new 3'terminus. GreA releases sequences of 2 to 3 nucleotides. This Limosilactobacillus fermentum (strain NBRC 3956 / LMG 18251) (Lactobacillus fermentum) protein is Transcription elongation factor GreA.